The primary structure comprises 283 residues: Thymidylate synthase (283 aa).

R22 serves as a coordination point for dUMP. C160 (nucleophile) is an active-site residue. DUMP-binding positions include 180–183, N191, and 221–223; these read RSCD and HIY. Residue D183 coordinates (6R)-5,10-methylene-5,6,7,8-tetrahydrofolate. Residue A282 coordinates (6R)-5,10-methylene-5,6,7,8-tetrahydrofolate.

It belongs to the thymidylate synthase family. Bacterial-type ThyA subfamily. In terms of assembly, homodimer.

It is found in the cytoplasm. It catalyses the reaction dUMP + (6R)-5,10-methylene-5,6,7,8-tetrahydrofolate = 7,8-dihydrofolate + dTMP. It functions in the pathway pyrimidine metabolism; dTTP biosynthesis. Its function is as follows. Catalyzes the reductive methylation of 2'-deoxyuridine-5'-monophosphate (dUMP) to 2'-deoxythymidine-5'-monophosphate (dTMP) while utilizing 5,10-methylenetetrahydrofolate (mTHF) as the methyl donor and reductant in the reaction, yielding dihydrofolate (DHF) as a by-product. This enzymatic reaction provides an intracellular de novo source of dTMP, an essential precursor for DNA biosynthesis. This is Thymidylate synthase from Idiomarina loihiensis (strain ATCC BAA-735 / DSM 15497 / L2-TR).